The primary structure comprises 443 residues: Thymidine phosphorylase (443 aa).

The protein belongs to the thymidine/pyrimidine-nucleoside phosphorylase family. In terms of assembly, homodimer.

The enzyme catalyses thymidine + phosphate = 2-deoxy-alpha-D-ribose 1-phosphate + thymine. It functions in the pathway pyrimidine metabolism; dTMP biosynthesis via salvage pathway; dTMP from thymine: step 1/2. Functionally, the enzymes which catalyze the reversible phosphorolysis of pyrimidine nucleosides are involved in the degradation of these compounds and in their utilization as carbon and energy sources, or in the rescue of pyrimidine bases for nucleotide synthesis. The polypeptide is Thymidine phosphorylase (Shewanella sp. (strain ANA-3)).